The following is a 320-amino-acid chain: rRNA methyltransferase 2, mitochondrial (320 aa).

Residues 1–18 (MILVYNRIRSIISSSLGR) constitute a mitochondrion transit peptide. S-adenosyl-L-methionine contacts are provided by residues 83 to 86 (PGAW), aspartate 104, 178 to 179 (DI), and aspartate 203. Catalysis depends on lysine 264, which acts as the Proton acceptor.

This sequence belongs to the class I-like SAM-binding methyltransferase superfamily. RNA methyltransferase RlmE family.

It is found in the mitochondrion. The catalysed reaction is uridine(2791) in 21S rRNA + S-adenosyl-L-methionine = 2'-O-methyluridine(2791) in 21S rRNA + S-adenosyl-L-homocysteine + H(+). S-adenosyl-L-methionine-dependent 2'-O-ribose methyltransferase that catalyzes the formation of 2'-O-methyluridine at position 2791 (Um2791) in the 21S mitochondrial large subunit ribosomal RNA (mtLSU rRNA), a universally conserved modification in the peptidyl transferase domain of the mtLSU rRNA. The sequence is that of rRNA methyltransferase 2, mitochondrial from Saccharomyces cerevisiae (strain ATCC 204508 / S288c) (Baker's yeast).